Here is a 632-residue protein sequence, read N- to C-terminus: Dihydrolipoyllysine-residue acetyltransferase component of pyruvate dehydrogenase complex, mitochondrial (632 aa).

Residues 1 to 77 constitute a mitochondrion transit peptide; sequence MWRVCARRVQ…LLGSPSRRSY (77 aa). Lipoyl-binding domains are found at residues 82–158 and 208–284; these read HQKV…CITV and HMQI…CIIV. The residue at position 91 (serine 91) is a Phosphoserine. Lysine 123 and lysine 249 each carry N6-lipoyllysine. The Peripheral subunit-binding (PSBD) domain maps to 342–379; that stretch reads FVSPLAKKLAAEKGIDLTQVKGTGPEGRIIKKDIDSFV. Arginine 446 contributes to the CoA binding site. Residue lysine 451 is modified to N6-acetyllysine. Lysine 458 bears the N6-succinyllysine mark. Serine 460 is a CoA binding site. Position 532 is an N6-succinyllysine (lysine 532). 3 residues coordinate CoA: serine 551, asparagine 552, and glycine 576. Catalysis depends on residues histidine 605 and aspartate 609.

The protein belongs to the 2-oxoacid dehydrogenase family. In terms of assembly, part of the pyruvate dehydrogenase complex (PDHc) that is a multi-enzyme complex composed of multiple copies of three enzymes, pyruvate dehydrogenase (subunits PDH1A and PDHB, E1 component), dihydrolipoamide acetyltransferase (DLAT, E2 component), and dihydrolipoamide dehydrogenase (DLD, E3 component) to which is added an additional protein the E3-binding protein (PDHX, E3BP). In terms of structural architecture, the E2 and E3BP components assemble into a 60meric central core with icosahedral symmetry. The central core is decorated with E1 and E3 proteins. Currently, two alternative models for the E2:E3BP stoichiometry are considered as being either 48:12 (E2(48)-E3BP(12)) or 40:20 (E2(40)-E3BP(20)). Interacts with PDK2 and PDK3. Interacts with SIRT4. Interacts with PDHB. Requires (R)-lipoate as cofactor. Post-translationally, delipoylated at Lys-123 and Lys-249 by SIRT4, delipoylation decreases the PHD complex activity. Expressed in flagella of epididymal sperm.

Its subcellular location is the mitochondrion matrix. The enzyme catalyses N(6)-[(R)-dihydrolipoyl]-L-lysyl-[protein] + acetyl-CoA = N(6)-[(R)-S(8)-acetyldihydrolipoyl]-L-lysyl-[protein] + CoA. As part of the pyruvate dehydrogenase complex, catalyzes the transfers of an acetyl group to a lipoic acid moiety. The pyruvate dehydrogenase complex, catalyzes the overall conversion of pyruvate to acetyl-CoA and CO(2), and thereby links cytoplasmic glycolysis and the mitochondrial tricarboxylic acid (TCA) cycle. The chain is Dihydrolipoyllysine-residue acetyltransferase component of pyruvate dehydrogenase complex, mitochondrial from Rattus norvegicus (Rat).